Consider the following 356-residue polypeptide: Putative zinc finger protein At1g68190 (356 aa).

The Zn(2+) site is built by C14, C17, C37, H42, C57, C60, C80, and H85. The B box-type 1; atypical zinc-finger motif lies at 14–56 (CEFCKAYRAVVYCIADTANLCLTCDAKVHSANSLSGRHLRTVL). A B box-type 2; atypical zinc finger spans residues 57–97 (CDSCKNQPCVVRCFDHKMFLCHGCNDKFHGGGSSEHRRRDL). The disordered stretch occupies residues 159-178 (ENGSSSLTERGDPSPLELPK).

This sequence belongs to the CONSTANS family.

It is found in the nucleus. This Arabidopsis thaliana (Mouse-ear cress) protein is Putative zinc finger protein At1g68190.